A 167-amino-acid chain; its full sequence is MANHPLTLEKDGFIVTTLDAAMAAAQKNSLWYMTFGLACCAVEMMHAAGARYDMDRFGMIPRASPRQCDLMIVAGTLTNKMAPAMRRVYDQMAEPRYVVSMGSCANGGGYYHYSYSVVRGCDRIVPVDVYVPGCPPTAEALVYGLMQLQRKVAERSTHSRPKLFARP.

The [4Fe-4S] cluster site is built by Cys-39, Cys-40, Cys-104, and Cys-134.

The protein belongs to the complex I 20 kDa subunit family. In terms of assembly, NDH-1 is composed of 14 different subunits. Subunits NuoB, C, D, E, F, and G constitute the peripheral sector of the complex. The cofactor is [4Fe-4S] cluster.

It localises to the cell inner membrane. The enzyme catalyses a quinone + NADH + 5 H(+)(in) = a quinol + NAD(+) + 4 H(+)(out). In terms of biological role, NDH-1 shuttles electrons from NADH, via FMN and iron-sulfur (Fe-S) centers, to quinones in the respiratory chain. Couples the redox reaction to proton translocation (for every two electrons transferred, four hydrogen ions are translocated across the cytoplasmic membrane), and thus conserves the redox energy in a proton gradient. The protein is NADH-quinone oxidoreductase subunit B 2 of Burkholderia mallei (strain NCTC 10247).